The chain runs to 575 residues: Proline--tRNA ligase, cytoplasmic (575 aa).

It belongs to the class-II aminoacyl-tRNA synthetase family.

The protein resides in the cytoplasm. It carries out the reaction tRNA(Pro) + L-proline + ATP = L-prolyl-tRNA(Pro) + AMP + diphosphate. The sequence is that of Proline--tRNA ligase, cytoplasmic (PRS) from Candida albicans (Yeast).